The primary structure comprises 113 residues: Nucleoid-associated protein EUBREC_0329 (113 aa).

The span at 1–12 (MARRGGFPGGMP) shows a compositional bias: gly residues. The interval 1–45 (MARRGGFPGGMPGNMNNLMKQAQKMQRQMEEAQKQLEDAEVTAKA) is disordered. The segment covering 27-37 (RQMEEAQKQLE) has biased composition (basic and acidic residues).

Belongs to the YbaB/EbfC family. In terms of assembly, homodimer.

Its subcellular location is the cytoplasm. The protein localises to the nucleoid. Binds to DNA and alters its conformation. May be involved in regulation of gene expression, nucleoid organization and DNA protection. The protein is Nucleoid-associated protein EUBREC_0329 of Agathobacter rectalis (strain ATCC 33656 / DSM 3377 / JCM 17463 / KCTC 5835 / VPI 0990) (Eubacterium rectale).